The sequence spans 379 residues: tRNA-specific 2-thiouridylase MnmA (379 aa).

ATP is bound by residues G9–S16 and M35. An interaction with target base in tRNA region spans residues N95–D97. The active-site Nucleophile is the C100. The cysteines at positions 100 and 198 are disulfide-linked. G124 lines the ATP pocket. An interaction with tRNA region spans residues K148–Q150. The active-site Cysteine persulfide intermediate is the C198. An interaction with tRNA region spans residues R325–Y326.

Belongs to the MnmA/TRMU family.

It is found in the cytoplasm. The enzyme catalyses S-sulfanyl-L-cysteinyl-[protein] + uridine(34) in tRNA + AH2 + ATP = 2-thiouridine(34) in tRNA + L-cysteinyl-[protein] + A + AMP + diphosphate + H(+). In terms of biological role, catalyzes the 2-thiolation of uridine at the wobble position (U34) of tRNA, leading to the formation of s(2)U34. This chain is tRNA-specific 2-thiouridylase MnmA, found in Acidovorax sp. (strain JS42).